The following is a 313-amino-acid chain: GTP cyclohydrolase 1 (313 aa).

A compositionally biased stretch (basic and acidic residues) spans Met-1 to Ser-10. A disordered region spans residues Met-1–Glu-120. The segment covering Asp-11–Pro-20 has biased composition (low complexity). The span at Lys-29–His-39 shows a compositional bias: basic residues. Over residues Ser-40 to Ser-64 the composition is skewed to basic and acidic residues. Positions Thr-72–Ile-102 are enriched in low complexity. Residues Cys-202, His-205, and Cys-273 each contribute to the Zn(2+) site.

This sequence belongs to the GTP cyclohydrolase I family. Toroid-shaped homodecamer, composed of two pentamers of five dimers.

The catalysed reaction is GTP + H2O = 7,8-dihydroneopterin 3'-triphosphate + formate + H(+). It participates in cofactor biosynthesis; 7,8-dihydroneopterin triphosphate biosynthesis; 7,8-dihydroneopterin triphosphate from GTP: step 1/1. Its activity is regulated as follows. GTP shows a positive allosteric effect, and tetrahydrobiopterin inhibits the enzyme activity. Its function is as follows. GTP cyclohydrolase 1 is the first enzyme in the biosynthetic pathway leading to folic acid. The protein is GTP cyclohydrolase 1 (gch-1) of Neurospora crassa (strain ATCC 24698 / 74-OR23-1A / CBS 708.71 / DSM 1257 / FGSC 987).